Consider the following 45-residue polypeptide: MTSNTPNQEPVSYPIFTVRWVAVHTLAVPTIFFLGAIAAMQFIQR.

At threonine 2 the chain carries N-acetylthreonine. Over 2-17 the chain is Cytoplasmic; the sequence is TSNTPNQEPVSYPIFT. The chain crosses the membrane as a helical span at residues 18–42; that stretch reads VRWVAVHTLAVPTIFFLGAIAAMQF. Residue histidine 24 participates in heme binding. Residues 43-45 lie on the Lumenal side of the membrane; that stretch reads IQR.

As to quaternary structure, heterodimer of an alpha subunit and a beta subunit. PSII is composed of 1 copy each of membrane proteins PsbA, PsbB, PsbC, PsbD, PsbE, PsbF, PsbH, PsbI, PsbJ, PsbK, PsbL, PsbM, PsbT, PsbX, PsbY, PsbZ, Psb30/Ycf12, peripheral proteins PsbO, CyanoQ (PsbQ), PsbU, PsbV and a large number of cofactors. It forms dimeric complexes. Part of a photosystem II (PSII) assembly intermediate complex PSII-I; crystallized from a strain deleted of psbJ, it forms monomeric PSII before addition of the oxygen evolving complex. PSII-I includes 3 assembly factors not found in mature PSII (Psb27, Psb28 and Psb34). It depends on heme b as a cofactor.

The protein resides in the cellular thylakoid membrane. Functionally, this b-type cytochrome is tightly associated with the reaction center of photosystem II (PSII). PSII is a light-driven water:plastoquinone oxidoreductase that uses light energy to abstract electrons from H(2)O, generating O(2) and a proton gradient subsequently used for ATP formation. It consists of a core antenna complex that captures photons, and an electron transfer chain that converts photonic excitation into a charge separation. This is Cytochrome b559 subunit beta from Thermosynechococcus vestitus (strain NIES-2133 / IAM M-273 / BP-1).